The sequence spans 228 residues: UPF0173 metal-dependent hydrolase PTH_1415 (228 aa).

The protein belongs to the UPF0173 family.

The protein is UPF0173 metal-dependent hydrolase PTH_1415 of Pelotomaculum thermopropionicum (strain DSM 13744 / JCM 10971 / SI).